Here is a 375-residue protein sequence, read N- to C-terminus: Saccharopine dehydrogenase [NAD(+), L-lysine-forming] (375 aa).

Positions 18 and 78 each coordinate L-saccharopine. Residue Lys-78 is the Proton acceptor of the active site. The active-site Proton donor is His-96. Gln-101 provides a ligand contact to L-saccharopine. Arg-130 lines the NAD(+) pocket. The L-saccharopine site is built by Arg-131 and Phe-135. NAD(+) is bound by residues 203 to 204, Asp-227, Thr-231, Tyr-252, and Val-279; that span reads GR. A disulfide bridge connects residues Cys-205 and Cys-250. L-saccharopine is bound at residue 280–282; the sequence is SAD. 322–325 is an NAD(+) binding site; that stretch reads IDHL.

This sequence belongs to the AlaDH/PNT family. In terms of assembly, monomer.

The catalysed reaction is L-saccharopine + NAD(+) + H2O = L-lysine + 2-oxoglutarate + NADH + H(+). Its pathway is amino-acid biosynthesis; L-lysine biosynthesis via AAA pathway; L-lysine from L-alpha-aminoadipate (fungal route): step 3/3. Functionally, catalyzes the NAD(+)-dependent cleavage of saccharopine to L-lysine and 2-oxoglutarate, the final step in the alpha-aminoadipate (AAA) pathway for lysin biosynthesis. This is Saccharopine dehydrogenase [NAD(+), L-lysine-forming] from Emericella nidulans (strain FGSC A4 / ATCC 38163 / CBS 112.46 / NRRL 194 / M139) (Aspergillus nidulans).